The sequence spans 122 residues: UPF0102 protein CLH_1204 (122 aa).

It belongs to the UPF0102 family.

The chain is UPF0102 protein CLH_1204 from Clostridium botulinum (strain Alaska E43 / Type E3).